The primary structure comprises 490 residues: Cytochrome P450 2C19 (490 aa).

Cys-435 is a heme binding site.

It belongs to the cytochrome P450 family. It depends on heme as a cofactor.

Its subcellular location is the endoplasmic reticulum membrane. The protein localises to the microsome membrane. It carries out the reaction an organic molecule + reduced [NADPH--hemoprotein reductase] + O2 = an alcohol + oxidized [NADPH--hemoprotein reductase] + H2O + H(+). The enzyme catalyses (5Z,8Z,11Z)-eicosatrienoate + reduced [NADPH--hemoprotein reductase] + O2 = 19-hydroxy-(5Z,8Z,11Z)-eicosatrienoate + oxidized [NADPH--hemoprotein reductase] + H2O + H(+). The catalysed reaction is (5Z,8Z,11Z,14Z)-eicosatetraenoate + reduced [NADPH--hemoprotein reductase] + O2 = 19-hydroxy-(5Z,8Z,11Z,14Z)-eicosatetraenoate + oxidized [NADPH--hemoprotein reductase] + H2O + H(+). It catalyses the reaction (5Z,8Z,11Z,14Z,17Z)-eicosapentaenoate + reduced [NADPH--hemoprotein reductase] + O2 = 19-hydroxy-(5Z,8Z,11Z,14Z,17Z)-eicosapentaenoate + oxidized [NADPH--hemoprotein reductase] + H2O + H(+). It carries out the reaction (4Z,7Z,10Z,13Z,16Z,19Z)-docosahexaenoate + reduced [NADPH--hemoprotein reductase] + O2 = 21-hydroxy-(4Z,7Z,10Z,13Z,16Z,19Z)-docosahexaenoate + oxidized [NADPH--hemoprotein reductase] + H2O + H(+). The enzyme catalyses (5Z,8Z,11Z,14Z)-eicosatetraenoate + reduced [NADPH--hemoprotein reductase] + O2 = (8R,9S)-epoxy-(5Z,11Z,14Z)-eicosatrienoate + oxidized [NADPH--hemoprotein reductase] + H2O + H(+). The catalysed reaction is (5Z,8Z,11Z,14Z)-eicosatetraenoate + reduced [NADPH--hemoprotein reductase] + O2 = (11R,12S)-epoxy-(5Z,8Z,14Z)-eicosatrienoate + oxidized [NADPH--hemoprotein reductase] + H2O + H(+). It catalyses the reaction (5Z,8Z,11Z,14Z)-eicosatetraenoate + reduced [NADPH--hemoprotein reductase] + O2 = (11S,12R)-epoxy-(5Z,8Z,14Z)-eicosatrienoate + oxidized [NADPH--hemoprotein reductase] + H2O + H(+). It carries out the reaction (5Z,8Z,11Z,14Z)-eicosatetraenoate + reduced [NADPH--hemoprotein reductase] + O2 = (14R,15S)-epoxy-(5Z,8Z,11Z)-eicosatrienoate + oxidized [NADPH--hemoprotein reductase] + H2O + H(+). The enzyme catalyses (5Z,8Z,11Z,14Z,17Z)-eicosapentaenoate + reduced [NADPH--hemoprotein reductase] + O2 = (17R,18S)-epoxy-(5Z,8Z,11Z,14Z)-eicosatetraenoate + oxidized [NADPH--hemoprotein reductase] + H2O + H(+). The catalysed reaction is (4Z,7Z,10Z,13Z,16Z,19Z)-docosahexaenoate + reduced [NADPH--hemoprotein reductase] + O2 = (19R,20S)-epoxy-(4Z,7Z,10Z,13Z,16Z)-docosapentaenoate + oxidized [NADPH--hemoprotein reductase] + H2O + H(+). It catalyses the reaction (4Z,7Z,10Z,13Z,16Z,19Z)-docosahexaenoate + reduced [NADPH--hemoprotein reductase] + O2 = (19S,20R)-epoxy-(4Z,7Z,10Z,13Z,16Z)-docosapentaenoate + oxidized [NADPH--hemoprotein reductase] + H2O + H(+). It carries out the reaction (4R)-limonene + reduced [NADPH--hemoprotein reductase] + O2 = (1R,5S)-carveol + oxidized [NADPH--hemoprotein reductase] + H2O + H(+). The enzyme catalyses (4S)-limonene + reduced [NADPH--hemoprotein reductase] + O2 = (1S,5R)-carveol + oxidized [NADPH--hemoprotein reductase] + H2O + H(+). The catalysed reaction is (4S)-limonene + reduced [NADPH--hemoprotein reductase] + O2 = (4S)-perillyl alcohol + oxidized [NADPH--hemoprotein reductase] + H2O + H(+). It catalyses the reaction fenbendazole + reduced [NADPH--hemoprotein reductase] + O2 = 4'-hydroxyfenbendazole + oxidized [NADPH--hemoprotein reductase] + H2O + H(+). The protein operates within lipid metabolism; fatty acid metabolism. It functions in the pathway terpene metabolism; (4R)-limonene degradation. A cytochrome P450 monooxygenase involved in the metabolism of polyunsaturated fatty acids (PUFA). Mechanistically, uses molecular oxygen inserting one oxygen atom into a substrate, and reducing the second into a water molecule, with two electrons provided by NADPH via cytochrome P450 reductase (NADPH--hemoprotein reductase). Catalyzes the hydroxylation of carbon-hydrogen bonds. Hydroxylates PUFA specifically at the omega-1 position. Catalyzes the epoxidation of double bonds of PUFA. Also metabolizes plant monoterpenes such as limonene. Oxygenates (R)- and (S)-limonene to produce carveol and perillyl alcohol. Responsible for the metabolism of a number of therapeutic agents such as the anticonvulsant drug S-mephenytoin, omeprazole, proguanil, certain barbiturates, diazepam, propranolol, citalopram and imipramine. Hydroxylates fenbendazole at the 4' position. The sequence is that of Cytochrome P450 2C19 (CYP2C19) from Homo sapiens (Human).